A 178-amino-acid polypeptide reads, in one-letter code: Nicotinamide-nucleotide adenylyltransferase (178 aa).

The protein belongs to the archaeal NMN adenylyltransferase family. Homohexamer.

It is found in the cytoplasm. It catalyses the reaction beta-nicotinamide D-ribonucleotide + ATP + H(+) = diphosphate + NAD(+). It participates in cofactor biosynthesis; NAD(+) biosynthesis; NAD(+) from nicotinamide D-ribonucleotide: step 1/1. This Methanothermobacter thermautotrophicus (strain ATCC 29096 / DSM 1053 / JCM 10044 / NBRC 100330 / Delta H) (Methanobacterium thermoautotrophicum) protein is Nicotinamide-nucleotide adenylyltransferase.